The sequence spans 575 residues: Potassium-transporting ATPase potassium-binding subunit (575 aa).

Helical transmembrane passes span 3 to 23 (FEGV…VPFF), 69 to 89 (AVLA…LLQG), 136 to 156 (CFQF…IAFI), 178 to 198 (ILMP…VPQS), 266 to 286 (LLEI…FGVL), 293 to 313 (GWVL…VAAL), 340 to 360 (FGWA…TGAV), 367 to 387 (LTPL…IWGG), 391 to 411 (GIAY…LMVG), 431 to 451 (IIFL…LAIP), 498 to 518 (VVLL…AGGL), and 543 to 563 (AGTI…LGPI).

The protein belongs to the KdpA family. In terms of assembly, the system is composed of three essential subunits: KdpA, KdpB and KdpC.

It is found in the cell inner membrane. Its function is as follows. Part of the high-affinity ATP-driven potassium transport (or Kdp) system, which catalyzes the hydrolysis of ATP coupled with the electrogenic transport of potassium into the cytoplasm. This subunit binds the periplasmic potassium ions and delivers the ions to the membrane domain of KdpB through an intramembrane tunnel. The protein is Potassium-transporting ATPase potassium-binding subunit of Gloeobacter violaceus (strain ATCC 29082 / PCC 7421).